Here is a 200-residue protein sequence, read N- to C-terminus: Probable nicotinate-nucleotide adenylyltransferase (200 aa).

The protein belongs to the NadD family.

It catalyses the reaction nicotinate beta-D-ribonucleotide + ATP + H(+) = deamido-NAD(+) + diphosphate. It participates in cofactor biosynthesis; NAD(+) biosynthesis; deamido-NAD(+) from nicotinate D-ribonucleotide: step 1/1. Functionally, catalyzes the reversible adenylation of nicotinate mononucleotide (NaMN) to nicotinic acid adenine dinucleotide (NaAD). The sequence is that of Probable nicotinate-nucleotide adenylyltransferase from Clavibacter sepedonicus (Clavibacter michiganensis subsp. sepedonicus).